The chain runs to 364 residues: Mannose-1-phosphate guanyltransferase (364 aa).

The protein belongs to the transferase hexapeptide repeat family.

It is found in the cytoplasm. The catalysed reaction is alpha-D-mannose 1-phosphate + GTP + H(+) = GDP-alpha-D-mannose + diphosphate. The protein operates within nucleotide-sugar biosynthesis; GDP-alpha-D-mannose biosynthesis; GDP-alpha-D-mannose from alpha-D-mannose 1-phosphate (GTP route): step 1/1. Its function is as follows. Involved in cell wall synthesis where it is required for glycosylation. Involved in cell cycle progression through cell-size checkpoint. In Hypocrea jecorina (Trichoderma reesei), this protein is Mannose-1-phosphate guanyltransferase (mpg1).